The following is a 335-amino-acid chain: Large ribosomal subunit protein uL3 (335 aa).

The interval 1-20 (MATIHRPRRGSLAFSPRKRA) is disordered.

Belongs to the universal ribosomal protein uL3 family. In terms of assembly, part of the 50S ribosomal subunit. Forms a cluster with proteins L14 and L24e.

One of the primary rRNA binding proteins, it binds directly near the 3'-end of the 23S rRNA, where it nucleates assembly of the 50S subunit. The chain is Large ribosomal subunit protein uL3 (rpl3) from Methanothrix harundinacea (strain 6Ac) (Methanosaeta harundinacea).